Reading from the N-terminus, the 116-residue chain is Large ribosomal subunit protein uL18 (116 aa).

Belongs to the universal ribosomal protein uL18 family. Part of the 50S ribosomal subunit; part of the 5S rRNA/L5/L18/L25 subcomplex. Contacts the 5S and 23S rRNAs.

This is one of the proteins that bind and probably mediate the attachment of the 5S RNA into the large ribosomal subunit, where it forms part of the central protuberance. The sequence is that of Large ribosomal subunit protein uL18 from Exiguobacterium sibiricum (strain DSM 17290 / CCUG 55495 / CIP 109462 / JCM 13490 / 255-15).